A 387-amino-acid polypeptide reads, in one-letter code: MTDDFGRVDFGAFLAPWHRADSDANFAIHQDLELVEHLDRLGFAEFWLGEHHSGGVEIVASPEMFMAAAAQRTQRIKLGLGVVSLPYHHPFLVADRLVLLDHLSRGRMIFGAGPGQLADDAKMLGIDPIDSRRKMEEAFDVIHRLLAGETVTQKTDWFTCQDAYLHVAPYSNIQKAVTATVSPTGPKLAGKYGSGILSLAATNPVGVEKLAEHWKIAEDIAAENGQTVDRADWRLSGIMHVAETEEQARADVRHGLLYLMNYLSNITPGFAAAPDVDSLIDGINDAGLAVIGTPEMAVTQIRRLQEKSGGFGKFLVLHGEWASTTAALHSFELIAQQVAPHFNGDLGPRLRGYNQTMNSNRSAADITQAAQEEAQKRFEAERAIRTN.

The protein belongs to the bacterial luciferase oxidoreductase family. FAD serves as cofactor.

The enzyme catalyses (4S)-limonene + NADPH + O2 + H(+) = limonene 1,2-epoxide + NADP(+) + H2O. The catalysed reaction is (4S)-limonene + NADH + O2 + H(+) = limonene 1,2-epoxide + NAD(+) + H2O. It carries out the reaction (4R)-limonene + NADH + O2 + H(+) = limonene 1,2-epoxide + NAD(+) + H2O. It catalyses the reaction (4R)-limonene + NADPH + O2 + H(+) = limonene 1,2-epoxide + NADP(+) + H2O. Its pathway is terpene metabolism; (4R)-limonene degradation; (1S,4R)-1-hydroxylimonen-2-one from (4R)-limonene: step 1/3. In terms of biological role, acts on both enantiomers of limonene by their NAD-dependent epoxidation at the 1,2 double bond forming limonene-1,2-epoxide. This chain is Limonene 1,2-monooxygenase (limB), found in Rhodococcus erythropolis (Arthrobacter picolinophilus).